A 483-amino-acid polypeptide reads, in one-letter code: tRNA-2-methylthio-N(6)-dimethylallyladenosine synthase (483 aa).

Residues 31 to 148 (KKLYIETQGC…LPQMLDQHHA (118 aa)) form the MTTase N-terminal domain. Residues Cys40, Cys77, Cys111, Cys192, Cys196, and Cys199 each contribute to the [4Fe-4S] cluster site. In terms of domain architecture, Radical SAM core spans 178–410 (RVEGFKAFVS…QQVIKQSSIE (233 aa)). A TRAM domain is found at 413–477 (DAMLGKIERV…LNLVYGELLN (65 aa)).

Belongs to the methylthiotransferase family. MiaB subfamily. Monomer. Requires [4Fe-4S] cluster as cofactor.

Its subcellular location is the cytoplasm. The catalysed reaction is N(6)-dimethylallyladenosine(37) in tRNA + (sulfur carrier)-SH + AH2 + 2 S-adenosyl-L-methionine = 2-methylsulfanyl-N(6)-dimethylallyladenosine(37) in tRNA + (sulfur carrier)-H + 5'-deoxyadenosine + L-methionine + A + S-adenosyl-L-homocysteine + 2 H(+). Its function is as follows. Catalyzes the methylthiolation of N6-(dimethylallyl)adenosine (i(6)A), leading to the formation of 2-methylthio-N6-(dimethylallyl)adenosine (ms(2)i(6)A) at position 37 in tRNAs that read codons beginning with uridine. This chain is tRNA-2-methylthio-N(6)-dimethylallyladenosine synthase, found in Acinetobacter baumannii (strain AB0057).